A 486-amino-acid chain; its full sequence is Siroheme synthase (486 aa).

The interval 1–204 (MNYLPIFVDL…HQIEQAEALV (204 aa)) is precorrin-2 dehydrogenase /sirohydrochlorin ferrochelatase. NAD(+) is bound by residues 22–23 (HV) and 43–44 (EK). A Phosphoserine modification is found at Ser128. Residues 216–486 (GEVSLVGAGP…NKETHWKQAA (271 aa)) form a uroporphyrinogen-III C-methyltransferase region. Pro225 is a binding site for S-adenosyl-L-methionine. Catalysis depends on Asp248, which acts as the Proton acceptor. Lys270 functions as the Proton donor in the catalytic mechanism. Residues 301 to 303 (GGD), Val306, 331 to 332 (TA), Met383, and Gly412 each bind S-adenosyl-L-methionine.

This sequence in the N-terminal section; belongs to the precorrin-2 dehydrogenase / sirohydrochlorin ferrochelatase family. It in the C-terminal section; belongs to the precorrin methyltransferase family.

It carries out the reaction uroporphyrinogen III + 2 S-adenosyl-L-methionine = precorrin-2 + 2 S-adenosyl-L-homocysteine + H(+). The catalysed reaction is precorrin-2 + NAD(+) = sirohydrochlorin + NADH + 2 H(+). The enzyme catalyses siroheme + 2 H(+) = sirohydrochlorin + Fe(2+). The protein operates within cofactor biosynthesis; adenosylcobalamin biosynthesis; precorrin-2 from uroporphyrinogen III: step 1/1. It participates in cofactor biosynthesis; adenosylcobalamin biosynthesis; sirohydrochlorin from precorrin-2: step 1/1. Its pathway is porphyrin-containing compound metabolism; siroheme biosynthesis; precorrin-2 from uroporphyrinogen III: step 1/1. It functions in the pathway porphyrin-containing compound metabolism; siroheme biosynthesis; siroheme from sirohydrochlorin: step 1/1. The protein operates within porphyrin-containing compound metabolism; siroheme biosynthesis; sirohydrochlorin from precorrin-2: step 1/1. Its function is as follows. Multifunctional enzyme that catalyzes the SAM-dependent methylations of uroporphyrinogen III at position C-2 and C-7 to form precorrin-2 via precorrin-1. Then it catalyzes the NAD-dependent ring dehydrogenation of precorrin-2 to yield sirohydrochlorin. Finally, it catalyzes the ferrochelation of sirohydrochlorin to yield siroheme. The polypeptide is Siroheme synthase (Actinobacillus pleuropneumoniae serotype 7 (strain AP76)).